Reading from the N-terminus, the 494-residue chain is Aspartyl/glutamyl-tRNA(Asn/Gln) amidotransferase subunit B (494 aa).

The protein belongs to the GatB/GatE family. GatB subfamily. In terms of assembly, heterotrimer of A, B and C subunits.

It catalyses the reaction L-glutamyl-tRNA(Gln) + L-glutamine + ATP + H2O = L-glutaminyl-tRNA(Gln) + L-glutamate + ADP + phosphate + H(+). The catalysed reaction is L-aspartyl-tRNA(Asn) + L-glutamine + ATP + H2O = L-asparaginyl-tRNA(Asn) + L-glutamate + ADP + phosphate + 2 H(+). In terms of biological role, allows the formation of correctly charged Asn-tRNA(Asn) or Gln-tRNA(Gln) through the transamidation of misacylated Asp-tRNA(Asn) or Glu-tRNA(Gln) in organisms which lack either or both of asparaginyl-tRNA or glutaminyl-tRNA synthetases. The reaction takes place in the presence of glutamine and ATP through an activated phospho-Asp-tRNA(Asn) or phospho-Glu-tRNA(Gln). The chain is Aspartyl/glutamyl-tRNA(Asn/Gln) amidotransferase subunit B from Synechococcus elongatus (strain ATCC 33912 / PCC 7942 / FACHB-805) (Anacystis nidulans R2).